We begin with the raw amino-acid sequence, 291 residues long: 3-hydroxy-5-phosphonooxypentane-2,4-dione thiolase (291 aa).

The Schiff-base intermediate with substrate role is filled by K203.

The protein belongs to the DeoC/FbaB aldolase family. As to quaternary structure, homodecamer.

The protein resides in the cytoplasm. The enzyme catalyses dihydroxyacetone phosphate + acetyl-CoA = 3-hydroxy-2,4-dioxopentyl phosphate + CoA. Involved in the degradation of phospho-AI-2, thereby terminating induction of the lsr operon and closing the AI-2 signaling cycle. Catalyzes the transfer of an acetyl moiety from 3-hydroxy-5-phosphonooxypentane-2,4-dione to CoA to form glycerone phosphate and acetyl-CoA. The protein is 3-hydroxy-5-phosphonooxypentane-2,4-dione thiolase of Escherichia coli (strain K12 / DH10B).